We begin with the raw amino-acid sequence, 143 residues long: Large ribosomal subunit protein uL11 (143 aa).

It belongs to the universal ribosomal protein uL11 family. In terms of assembly, part of the ribosomal stalk of the 50S ribosomal subunit. Interacts with L10 and the large rRNA to form the base of the stalk. L10 forms an elongated spine to which L12 dimers bind in a sequential fashion forming a multimeric L10(L12)X complex. In terms of processing, one or more lysine residues are methylated.

Forms part of the ribosomal stalk which helps the ribosome interact with GTP-bound translation factors. The sequence is that of Large ribosomal subunit protein uL11 from Borreliella afzelii (strain PKo) (Borrelia afzelii).